A 3424-amino-acid polypeptide reads, in one-letter code: Genome polyprotein (3424 aa).

Positions 2 to 15 (SKKPGKSAAKRTVN) are interaction with host EXOC1. The Cytoplasmic portion of the chain corresponds to 2 to 101 (SKKPGKSAAK…SVNKRKEKKK (100 aa)). Residues 35-70 (MLDVRGAPRLILALMAFFRFAAIKPTLGLKKRWRSV) form a hydrophobic; homodimerization of capsid protein C region. A propeptide spans 102–118 (SFSTALLWITMITAVAG) (ER anchor for the capsid protein C, removed in mature form by serine protease NS3). A helical membrane pass occupies residues 102-122 (SFSTALLWITMITAVAGLKIS). Residues 123 to 244 (SHRDRPLLMV…TTKYLTKVEN (122 aa)) are Extracellular-facing. Asn-133 is a glycosylation site (N-linked (GlcNAc...) asparagine; by host). A helical membrane pass occupies residues 245–265 (WVIRNPGYALVALATAWMLGS). At 266–270 (NTPQR) the chain is on the cytoplasmic side. The chain crosses the membrane as a helical span at residues 271 to 285 (VVFMIMMMLIAPAYS). Topologically, residues 286-738 (LNCLGISNRD…GVFGTAFRSL (453 aa)) are extracellular. 8 disulfide bridges follow: Cys-288-Cys-315, Cys-345-Cys-401, Cys-345-Cys-406, Cys-359-Cys-390, Cys-377-Cys-401, Cys-377-Cys-406, Cys-475-Cys-573, and Cys-590-Cys-621. The segment at 383–396 (DRGWGNGCGLFGKG) is fusion peptide. A helical membrane pass occupies residues 739-759 (FGGMSWVTQALMGALLLWLGI). At 760–765 (SARERT) the chain is on the cytoplasmic side. A helical membrane pass occupies residues 766 to 786 (VSLIMLSVGGILLFLAVNVHA). Residues 787 to 1170 (DTGCAIDMAR…EVLRRRWTAN (384 aa)) are Extracellular-facing. Cystine bridges form between Cys-790-Cys-801, Cys-841-Cys-929, Cys-965-Cys-1009, Cys-1067-Cys-1116, Cys-1078-Cys-1099, Cys-1078-Cys-1100, Cys-1099-Cys-1103, and Cys-1100-Cys-1103. N-linked (GlcNAc...) asparagine; by host glycosylation is found at Asn-916 and Asn-993. A helical membrane pass occupies residues 1171 to 1191 (LALPTSALLMACFIFGGFTYL). The Cytoplasmic portion of the chain corresponds to 1192–1213 (DLFRYFILVGAAFAEANSGGDV). The helical transmembrane segment at 1214 to 1234 (VHLAMIAAFNIQPVALVTTFF) threads the bilayer. Over 1235 to 1276 (RKNWTNRENMILIIAAACTQMACMELKIELFHVMNSLSLAWM) the chain is Lumenal. Residues 1277-1297 (ILKALTTGTTSTLAMPFLAAL) form a helical membrane-spanning segment. Residues 1298-1302 (SPPMN) are Cytoplasmic-facing. Residues 1303–1323 (WLGLDVVRCLLIMAGVAALIS) traverse the membrane as a helical segment. At 1324-1333 (ERRESLAKKK) the chain is on the lumenal side. A helical membrane pass occupies residues 1334–1354 (GALLISAALALTGAFSPLVLQ). The Cytoplasmic segment spans residues 1355 to 1367 (GALMFTQSLGKRG). The helical transmembrane segment at 1368-1388 (WPASEVLTAVGMTFALAGSVA) threads the bilayer. The Lumenal portion of the chain corresponds to 1389-1391 (RLD). A helical transmembrane segment spans residues 1392–1412 (GGTMAIPLATMAILAVAYVLS). Residues 1413–1469 (GKSTDMWLERCADISWINEAEITGTSPRLDVELDSNGDFKMINDPGVPMWMWTCRMG) are Cytoplasmic-facing. Residues 1420–1459 (LERCADISWINEAEITGTSPRLDVELDSNGDFKMINDPGV) form an interacts with and activates NS3 protease region. The helical intramembrane region spans 1470–1490 (LMAMAAYNPVLIPVSMAGYWM). Residues 1491-2167 (TVKIHKRGGV…ALEELPDTVE (677 aa)) lie on the Cytoplasmic side of the membrane. A Peptidase S7 domain is found at 1498-1675 (GGVMWDVPAP…ERQEEETPEA (178 aa)). Residues His-1548, Asp-1572, and Ser-1632 each act as charge relay system; for serine protease NS3 activity in the active site. A Helicase ATP-binding domain is found at 1678-1834 (PDMLKKRRLT…DSNAPIIDQE (157 aa)). The interval 1682–1685 (KKRR) is important for RNA-binding. 1691–1698 (LHPGAGKT) contributes to the ATP binding site. A DEAH box motif is present at residues 1782 to 1785 (DEAH). Residues 1845-2009 (GFEWITEYTG…GLVAQLYGPE (165 aa)) enclose the Helicase C-terminal domain. Lys-1886 carries the N6-acetyllysine; by host modification. Residues 1944–1969 (APITPASAAQRRGRIGRDPTQSGDEY) form a disordered region. Residues 2160–2164 (EELPD) form a regulates the ATPase activity of NS3 helicase region. Residues 2168–2188 (TILLMTMMCVASLGMFTLMVH) form a helical membrane-spanning segment. The Lumenal segment spans residues 2189 to 2190 (RR). Positions 2191–2211 (GLGKTGLGTLVLATVTVLLWI) form an intramembrane region, helical. At 2212 to 2213 (SD) the chain is on the lumenal side. A helical transmembrane segment spans residues 2214–2234 (VPAPKIAGVLLIAFLLMIVLI). Over 2235–2249 (PEPEKQRSQTDNHLA) the chain is Cytoplasmic. A helical transmembrane segment spans residues 2250 to 2264 (IFLVCVLLLIGAVSA). The Lumenal segment spans residues 2265–2299 (NEMGWLETTKKDIGKLFRSSGDTQEQSTWQSWAPE). The segment at residues 2300–2320 (VRAATAWAGYAGLTVFLTPLF) is an intramembrane region (helical). Residues 2321–2342 (RHLITTQYVSFSLTAITAQASA) lie on the Lumenal side of the membrane. Residues 2343 to 2363 (LFGLSAGYPFVGIDLAVGFLL) traverse the membrane as a helical segment. Topologically, residues 2364-2371 (LGCYGQYN) are cytoplasmic. Residues 2372-2392 (LPTAVATGLLLLAHYGYMIPG) traverse the membrane as a helical segment. Topologically, residues 2393 to 2439 (WQAEAMRAAQKRTAAGVMKNAVVDGIVATDIPEVDTATPITEKKLGQ) are lumenal. A helical membrane pass occupies residues 2440 to 2460 (ILLILLCGASLLVKFDTMVLV). Residues 2461–3424 (EAGVLTTSAM…PSPVLFTGAI (964 aa)) lie on the Cytoplasmic side of the membrane. The mRNA cap 0-1 NS5-type MT domain maps to 2520–2784 (GGGSAPTLGE…DVCLGSGTRA (265 aa)). Ser-2575 provides a ligand contact to S-adenosyl-L-methionine. A Phosphoserine modification is found at Ser-2575. The For 2'-O-MTase activity role is filled by Lys-2580. Residues Gly-2605, Trp-2606, Thr-2623, Lys-2624, Asp-2650, and Val-2651 each contribute to the S-adenosyl-L-methionine site. Catalysis depends on Asp-2665, which acts as the For 2'-O-MTase activity. Ile-2666 provides a ligand contact to S-adenosyl-L-methionine. Residues Lys-2700 and Glu-2736 each act as for 2'-O-MTase activity in the active site. Tyr-2738 is an S-adenosyl-L-methionine binding site. Residues Glu-2958, His-2962, Cys-2967, and Cys-2970 each coordinate Zn(2+). The region spanning 3048–3200 (GNMFADDTAG…KPIDDRFASA (153 aa)) is the RdRp catalytic domain. The Zn(2+) site is built by His-3235, Cys-3251, and Cys-3370.

It in the N-terminal section; belongs to the class I-like SAM-binding methyltransferase superfamily. mRNA cap 0-1 NS5-type methyltransferase family. In terms of assembly, homodimer. Interacts (via N-terminus) with host EXOC1 (via C-terminus); this interaction results in EXOC1 degradation through the proteasome degradation pathway. As to quaternary structure, forms heterodimers with envelope protein E in the endoplasmic reticulum and Golgi. Homodimer; in the endoplasmic reticulum and Golgi. Interacts with protein prM. Interacts with non-structural protein 1. In terms of assembly, homodimer; Homohexamer when secreted. Interacts with envelope protein E. NS1 interacts with NS4B. Interacts with host complement protein CFH; this interaction leads to the degradation of C3. As to quaternary structure, interacts (via N-terminus) with serine protease NS3. Forms a heterodimer with serine protease NS3. May form homooligomers. In terms of assembly, forms a heterodimer with NS2B. Interacts with non-structural protein 2A (via N-terminus). Interacts with NS4B. Interacts with unphosphorylated RNA-directed RNA polymerase NS5; this interaction stimulates RNA-directed RNA polymerase NS5 guanylyltransferase activity. As to quaternary structure, interacts with serine protease NS3. Homodimer. Interacts with host STAT2; this interaction inhibits the phosphorylation of the latter, and, when all viral proteins are present (polyprotein), targets STAT2 for degradation. Interacts with serine protease NS3. Post-translationally, specific enzymatic cleavages in vivo yield mature proteins. Cleavages in the lumen of endoplasmic reticulum are performed by host signal peptidase, whereas cleavages in the cytoplasmic side are performed by serine protease NS3. Signal cleavage at the 2K-4B site requires a prior NS3 protease-mediated cleavage at the 4A-2K site. In terms of processing, cleaved in post-Golgi vesicles by a host furin, releasing the mature small envelope protein M, and peptide pr. This cleavage is incomplete as up to 30% of viral particles still carry uncleaved prM. N-glycosylated. Post-translationally, N-glycosylated. The excreted form is glycosylated and this is required for efficient secretion of the protein from infected cells. In terms of processing, acetylated by host KAT5. Acetylation modulates NS3 RNA-binding and unwinding activities and plays an important positive role for viral replication. Phosphorylated on serines residues. This phosphorylation may trigger NS5 nuclear localization.

Its subcellular location is the virion. It localises to the host nucleus. The protein localises to the host cytoplasm. It is found in the host perinuclear region. The protein resides in the secreted. Its subcellular location is the virion membrane. It localises to the host endoplasmic reticulum membrane. It carries out the reaction Selective hydrolysis of -Xaa-Xaa-|-Yaa- bonds in which each of the Xaa can be either Arg or Lys and Yaa can be either Ser or Ala.. It catalyses the reaction RNA(n) + a ribonucleoside 5'-triphosphate = RNA(n+1) + diphosphate. The catalysed reaction is a ribonucleoside 5'-triphosphate + H2O = a ribonucleoside 5'-diphosphate + phosphate + H(+). The enzyme catalyses ATP + H2O = ADP + phosphate + H(+). It carries out the reaction a 5'-end (5'-triphosphoguanosine)-ribonucleoside in mRNA + S-adenosyl-L-methionine = a 5'-end (N(7)-methyl 5'-triphosphoguanosine)-ribonucleoside in mRNA + S-adenosyl-L-homocysteine. It catalyses the reaction a 5'-end (N(7)-methyl 5'-triphosphoguanosine)-ribonucleoside in mRNA + S-adenosyl-L-methionine = a 5'-end (N(7)-methyl 5'-triphosphoguanosine)-(2'-O-methyl-ribonucleoside) in mRNA + S-adenosyl-L-homocysteine + H(+). In terms of biological role, plays a role in virus budding by binding to the cell membrane and gathering the viral RNA into a nucleocapsid that forms the core of a mature virus particle. During virus entry, may induce genome penetration into the host cytoplasm after hemifusion induced by the surface proteins. Can migrate to the cell nucleus where it modulates host functions. Overcomes the anti-viral effects of host EXOC1 by sequestering and degrading the latter through the proteasome degradation pathway. Its function is as follows. Inhibits RNA silencing by interfering with host Dicer. Functionally, prevents premature fusion activity of envelope proteins in trans-Golgi by binding to envelope protein E at pH6.0. After virion release in extracellular space, gets dissociated from E dimers. Acts as a chaperone for envelope protein E during intracellular virion assembly by masking and inactivating envelope protein E fusion peptide. prM is the only viral peptide matured by host furin in the trans-Golgi network probably to avoid catastrophic activation of the viral fusion activity in acidic Golgi compartment prior to virion release. prM-E cleavage is inefficient, and many virions are only partially matured. These uncleaved prM would play a role in immune evasion. In terms of biological role, may play a role in virus budding. Exerts cytotoxic effects by activating a mitochondrial apoptotic pathway through M ectodomain. May display a viroporin activity. Its function is as follows. Binds to host cell surface receptor and mediates fusion between viral and cellular membranes. Envelope protein is synthesized in the endoplasmic reticulum in the form of heterodimer with protein prM. They play a role in virion budding in the ER, and the newly formed immature particle is covered with 60 spikes composed of heterodimer between precursor prM and envelope protein E. The virion is transported to the Golgi apparatus where the low pH causes dissociation of PrM-E heterodimers and formation of E homodimers. prM-E cleavage is inefficient, and many virions are only partially matured. These uncleaved prM would play a role in immune evasion. Functionally, involved in immune evasion, pathogenesis and viral replication. Once cleaved off the polyprotein, is targeted to three destinations: the viral replication cycle, the plasma membrane and the extracellular compartment. Essential for viral replication. Required for formation of the replication complex and recruitment of other non-structural proteins to the ER-derived membrane structures. Excreted as a hexameric lipoparticle that plays a role against host immune response. Antagonizing the complement function. Binds to the host macrophages and dendritic cells. Inhibits signal transduction originating from Toll-like receptor 3 (TLR3). Component of the viral RNA replication complex that functions in virion assembly and antagonizes the host alpha/beta interferon antiviral response. In terms of biological role, required cofactor for the serine protease function of NS3. May have membrane-destabilizing activity and form viroporins. Its function is as follows. Displays three enzymatic activities: serine protease, NTPase and RNA helicase. NS3 serine protease, in association with NS2B, performs its autocleavage and cleaves the polyprotein at dibasic sites in the cytoplasm: C-prM, NS2A-NS2B, NS2B-NS3, NS3-NS4A, NS4A-2K and NS4B-NS5. NS3 RNA helicase binds RNA and unwinds dsRNA in the 3' to 5' direction. Functionally, regulates the ATPase activity of the NS3 helicase activity. NS4A allows NS3 helicase to conserve energy during unwinding. Functions as a signal peptide for NS4B and is required for the interferon antagonism activity of the latter. In terms of biological role, induces the formation of ER-derived membrane vesicles where the viral replication takes place. Inhibits interferon (IFN)-induced host STAT1 phosphorylation and nuclear translocation, thereby preventing the establishment of cellular antiviral state by blocking the IFN-alpha/beta pathway. Inhibits STAT2 translocation in the nucleus after IFN-alpha treatment. Its function is as follows. Replicates the viral (+) and (-) RNA genome, and performs the capping of genomes in the cytoplasm. NS5 methylates viral RNA cap at guanine N-7 and ribose 2'-O positions. Besides its role in RNA genome replication, also prevents the establishment of cellular antiviral state by blocking the interferon-alpha/beta (IFN-alpha/beta) signaling pathway. Inhibits host TYK2 and STAT2 phosphorylation, thereby preventing activation of JAK-STAT signaling pathway. The chain is Genome polyprotein from Aedes sp. (Human).